Reading from the N-terminus, the 316-residue chain is Adenine deaminase (316 aa).

Positions 14, 16, and 194 each coordinate Zn(2+). Glu-197 serves as the catalytic Proton donor. Asp-275 lines the Zn(2+) pocket. Asp-276 lines the substrate pocket.

It belongs to the metallo-dependent hydrolases superfamily. Adenosine and AMP deaminases family. Adenine deaminase type 2 subfamily. Zn(2+) is required as a cofactor.

It catalyses the reaction adenine + H2O + H(+) = hypoxanthine + NH4(+). Functionally, catalyzes the hydrolytic deamination of adenine to hypoxanthine. Plays an important role in the purine salvage pathway and in nitrogen catabolism. The protein is Adenine deaminase of Stutzerimonas stutzeri (strain A1501) (Pseudomonas stutzeri).